The primary structure comprises 267 residues: Kafirin PSKR2 (267 aa).

The signal sequence occupies residues 1 to 21 (MATKIFVLLALLALSVSTTTA).

It belongs to the zein family.

In terms of biological role, major seed storage prolamin. The chain is Kafirin PSKR2 from Sorghum bicolor (Sorghum).